The following is a 610-amino-acid chain: Methionine--tRNA ligase (610 aa).

A 'HIGH' region motif is present at residues 12 to 22 (PYANGPRHIGH). The Zn(2+) site is built by C144, C147, C157, and C160. The 'KMSKS' region motif lies at 348–352 (KFSSS). S351 serves as a coordination point for ATP.

Belongs to the class-I aminoacyl-tRNA synthetase family. MetG type 1 subfamily. Monomer. Requires Zn(2+) as cofactor.

The protein localises to the cytoplasm. The enzyme catalyses tRNA(Met) + L-methionine + ATP = L-methionyl-tRNA(Met) + AMP + diphosphate. Is required not only for elongation of protein synthesis but also for the initiation of all mRNA translation through initiator tRNA(fMet) aminoacylation. The polypeptide is Methionine--tRNA ligase (Corynebacterium diphtheriae (strain ATCC 700971 / NCTC 13129 / Biotype gravis)).